The primary structure comprises 30 residues: Babycurus-toxin 1 (30 aa).

Positions Lys2–Gln30 constitute an LCN-type CS-alpha/beta domain.

It belongs to the long (4 C-C) scorpion toxin superfamily. Sodium channel inhibitor family. As to expression, expressed by the venom gland.

Its subcellular location is the secreted. Binds to sodium channels (Nav) and inhibits both the activation and inactivation of the activated channels, thereby blocking neuronal transmission. In Babycurus centrurimorphus (East African scorpion), this protein is Babycurus-toxin 1.